A 284-amino-acid polypeptide reads, in one-letter code: Pantothenate synthetase (284 aa).

Residue 30–37 (MGNLHDGH) coordinates ATP. His37 functions as the Proton donor in the catalytic mechanism. Gln61 contacts (R)-pantoate. Residue Gln61 coordinates beta-alanine. 149 to 152 (GEKD) contacts ATP. Gln155 is a (R)-pantoate binding site. ATP contacts are provided by residues Ile178 and 186–189 (LSSR).

It belongs to the pantothenate synthetase family. In terms of assembly, homodimer.

It localises to the cytoplasm. It carries out the reaction (R)-pantoate + beta-alanine + ATP = (R)-pantothenate + AMP + diphosphate + H(+). The protein operates within cofactor biosynthesis; (R)-pantothenate biosynthesis; (R)-pantothenate from (R)-pantoate and beta-alanine: step 1/1. Functionally, catalyzes the condensation of pantoate with beta-alanine in an ATP-dependent reaction via a pantoyl-adenylate intermediate. In Salmonella heidelberg (strain SL476), this protein is Pantothenate synthetase.